A 138-amino-acid polypeptide reads, in one-letter code: Small ribosomal subunit protein uS11c (138 aa).

Positions 1-22 are disordered; sequence MTKPIPRIGSRRNGRIGSRKNA. The span at 9-22 shows a compositional bias: basic residues; sequence GSRRNGRIGSRKNA.

It belongs to the universal ribosomal protein uS11 family. In terms of assembly, part of the 30S ribosomal subunit.

It is found in the plastid. It localises to the chloroplast. This chain is Small ribosomal subunit protein uS11c, found in Dioscorea elephantipes (Elephant's foot yam).